Reading from the N-terminus, the 337-residue chain is Major outer membrane protein P.IB (337 aa).

Positions 1 to 19 (MKKSLIALTLAALPVAAMA) are cleaved as a signal peptide.

This sequence belongs to the Gram-negative porin family. In terms of assembly, homotrimer.

It localises to the cell outer membrane. Serves as a slightly cation selective porin. The sequence is that of Major outer membrane protein P.IB (por) from Neisseria lactamica.